We begin with the raw amino-acid sequence, 284 residues long: MEMO1 family protein Saci_0089 (284 aa).

It belongs to the MEMO1 family.

This is MEMO1 family protein Saci_0089 from Sulfolobus acidocaldarius (strain ATCC 33909 / DSM 639 / JCM 8929 / NBRC 15157 / NCIMB 11770).